Reading from the N-terminus, the 181-residue chain is Inner membrane-spanning protein YciB (181 aa).

The next 5 helical transmembrane spans lie at 10–30, 50–70, 72–92, 118–138, and 148–168; these read LVIF…GALI, MHLI…VFHD, AFIK…LGVS, VTWY…YVAF, and FKVF…VFYL.

Belongs to the YciB family.

It localises to the cell inner membrane. Plays a role in cell envelope biogenesis, maintenance of cell envelope integrity and membrane homeostasis. The chain is Inner membrane-spanning protein YciB from Shewanella oneidensis (strain ATCC 700550 / JCM 31522 / CIP 106686 / LMG 19005 / NCIMB 14063 / MR-1).